Here is a 197-residue protein sequence, read N- to C-terminus: Ribose 1,5-bisphosphate phosphokinase PhnN (197 aa).

21 to 28 (GPSGAGKD) contacts ATP.

Belongs to the ribose 1,5-bisphosphokinase family.

The catalysed reaction is alpha-D-ribose 1,5-bisphosphate + ATP = 5-phospho-alpha-D-ribose 1-diphosphate + ADP. The protein operates within metabolic intermediate biosynthesis; 5-phospho-alpha-D-ribose 1-diphosphate biosynthesis; 5-phospho-alpha-D-ribose 1-diphosphate from D-ribose 5-phosphate (route II): step 3/3. In terms of biological role, catalyzes the phosphorylation of ribose 1,5-bisphosphate to 5-phospho-D-ribosyl alpha-1-diphosphate (PRPP). The polypeptide is Ribose 1,5-bisphosphate phosphokinase PhnN (Rhizobium etli (strain CIAT 652)).